We begin with the raw amino-acid sequence, 163 residues long: Nucleotide-binding protein Mvan_0997 (163 aa).

This sequence belongs to the YajQ family.

Functionally, nucleotide-binding protein. This chain is Nucleotide-binding protein Mvan_0997, found in Mycolicibacterium vanbaalenii (strain DSM 7251 / JCM 13017 / BCRC 16820 / KCTC 9966 / NRRL B-24157 / PYR-1) (Mycobacterium vanbaalenii).